Reading from the N-terminus, the 660-residue chain is Probable cation-transporting P-type ATPase J (660 aa).

5 consecutive transmembrane segments (helical) span residues 33–53 (WAAL…CGAP), 60–80 (LFLA…LQAL), 94–114 (AAIG…IVIF), 261–281 (IGMV…GETL), and 292–312 (MIVA…LAAI). The active-site 4-aspartylphosphate intermediate is the D340. Residues D544 and D548 each contribute to the Mg(2+) site. The chain crosses the membrane as a helical span at residues 598–618 (IVVANLIVAVTFIAGLVVWDL).

It belongs to the cation transport ATPase (P-type) (TC 3.A.3) family. Type IB subfamily.

It is found in the cell membrane. It catalyses the reaction ATP + H2O = ADP + phosphate + H(+). The protein is Probable cation-transporting P-type ATPase J (ctpJ) of Mycobacterium tuberculosis (strain CDC 1551 / Oshkosh).